Here is a 971-residue protein sequence, read N- to C-terminus: Lon protease homolog, mitochondrial (971 aa).

Residues 1 to 55 constitute a mitochondrion transit peptide; that stretch reads MYRAGAVLLRGATRTRLLAAASAHQSFATFSQRNQSILMMKSMELAGNSGERRFY. The region spanning 89–359 is the Lon N-terminal domain; that stretch reads VPMLAINRYP…IALLLIQKEK (271 aa). Positions 190–255 are disordered; that stretch reads TPKNETPLNG…PPSATGEKQK (66 aa). Positions 214–224 are enriched in pro residues; it reads LTPPPSPPPLA. 512 to 519 contributes to the ATP binding site; it reads GPPGVGKT. Residues 718–749 are disordered; that stretch reads AEQQNEDEEPAEKATTAITENSEAEPITSTSS. Over residues 733-749 the composition is skewed to polar residues; sequence TAITENSEAEPITSTSS. Residues 784 to 971 enclose the Lon proteolytic domain; that stretch reads VTPPGVIMGL…YDELYEHLFQ (188 aa). Catalysis depends on residues serine 878 and lysine 921.

The protein belongs to the peptidase S16 family. Homohexamer or homoheptamer. Organized in a ring with a central cavity.

The protein resides in the mitochondrion matrix. It carries out the reaction Hydrolysis of proteins in presence of ATP.. Functionally, ATP-dependent serine protease that mediates the selective degradation of misfolded, unassembled or oxidatively damaged polypeptides as well as certain short-lived regulatory proteins in the mitochondrial matrix. May also have a chaperone function in the assembly of inner membrane protein complexes. Participates in the regulation of mitochondrial gene expression and in the maintenance of the integrity of the mitochondrial genome. Binds to mitochondrial DNA in a site-specific manner. Involved in the degradation of transcription factor atfs-1 in the mitochondrion. The chain is Lon protease homolog, mitochondrial from Caenorhabditis elegans.